We begin with the raw amino-acid sequence, 183 residues long: Microfibrillar-associated protein 2 (183 aa).

Positions Met-1–Ala-16 form a signal peptide, or 18. Residue Gln-17 is modified to Pyrrolidone carboxylic acid. Residues Tyr-46, Tyr-47, and Tyr-49 each carry the sulfotyrosine modification. The segment at Val-52 to Pro-92 is disordered. The segment covering Glu-59 to Glu-70 has biased composition (low complexity). Residues Cys-153–Cys-183 form the ShKT domain. 3 disulfide bridges follow: Cys-153/Cys-183, Cys-160/Cys-176, and Cys-169/Cys-180.

The protein belongs to the MFAP family. As to quaternary structure, forms a ternary complex with BGN and ELN. Interacts with FBN1 (via N-terminal domain) and FBN2. In terms of processing, forms intermolecular disulfide bonds either with other MAGP-1 molecules or with other components of the microfibrils. May form transglutaminase cross-links. Post-translationally, O-glycosylated.

The protein resides in the secreted. The protein localises to the extracellular space. It is found in the extracellular matrix. In terms of biological role, component of the elastin-associated microfibrils. The polypeptide is Microfibrillar-associated protein 2 (Mfap2) (Mus musculus (Mouse)).